Consider the following 185-residue polypeptide: UPF0397 protein lhv_0999 (185 aa).

The next 5 helical transmembrane spans lie at Val11–Pro31, Phe45–Gly65, Ile72–Ile92, Ile111–Pro131, and Val145–Thr165.

This sequence belongs to the UPF0397 family.

It localises to the cell membrane. In Lactobacillus helveticus (strain DPC 4571), this protein is UPF0397 protein lhv_0999.